A 204-amino-acid chain; its full sequence is Methylthioribulose-1-phosphate dehydratase (204 aa).

Zn(2+)-binding residues include histidine 94 and histidine 96.

It belongs to the aldolase class II family. MtnB subfamily. Requires Zn(2+) as cofactor.

It carries out the reaction 5-(methylsulfanyl)-D-ribulose 1-phosphate = 5-methylsulfanyl-2,3-dioxopentyl phosphate + H2O. It participates in amino-acid biosynthesis; L-methionine biosynthesis via salvage pathway; L-methionine from S-methyl-5-thio-alpha-D-ribose 1-phosphate: step 2/6. Functionally, catalyzes the dehydration of methylthioribulose-1-phosphate (MTRu-1-P) into 2,3-diketo-5-methylthiopentyl-1-phosphate (DK-MTP-1-P). The protein is Methylthioribulose-1-phosphate dehydratase of Pseudomonas syringae pv. syringae (strain B728a).